A 449-amino-acid polypeptide reads, in one-letter code: UDP-N-acetylglucosamine 1-carboxyvinyltransferase (449 aa).

The segment covering methionine 1–glutamate 12 has biased composition (basic and acidic residues). The tract at residues methionine 1–threonine 30 is disordered. Position 51 to 52 (lysine 51 to asparagine 52) interacts with phosphoenolpyruvate. Position 121 (arginine 121) interacts with UDP-N-acetyl-alpha-D-glucosamine. Residue cysteine 145 is the Proton donor of the active site. A 2-(S-cysteinyl)pyruvic acid O-phosphothioketal modification is found at cysteine 145. UDP-N-acetyl-alpha-D-glucosamine contacts are provided by residues arginine 150–glutamine 154, aspartate 333, and isoleucine 355.

Belongs to the EPSP synthase family. MurA subfamily.

The protein resides in the cytoplasm. The enzyme catalyses phosphoenolpyruvate + UDP-N-acetyl-alpha-D-glucosamine = UDP-N-acetyl-3-O-(1-carboxyvinyl)-alpha-D-glucosamine + phosphate. It participates in cell wall biogenesis; peptidoglycan biosynthesis. Functionally, cell wall formation. Adds enolpyruvyl to UDP-N-acetylglucosamine. In Burkholderia pseudomallei (strain 1710b), this protein is UDP-N-acetylglucosamine 1-carboxyvinyltransferase.